The primary structure comprises 465 residues: Serine carboxypeptidase 24 (465 aa).

The signal sequence occupies residues methionine 1–serine 24. N-linked (GlcNAc...) asparagine glycans are attached at residues asparagine 54, asparagine 105, and asparagine 139. Intrachain disulfides connect cysteine 88–cysteine 349, cysteine 249–cysteine 260, and cysteine 285–cysteine 317. Serine 181 is a catalytic residue. N-linked (GlcNAc...) asparagine glycosylation is found at asparagine 250, asparagine 293, and asparagine 338. A propeptide spans alanine 287–proline 316 (linker peptide). Active-site residues include aspartate 386 and histidine 438.

Belongs to the peptidase S10 family. In terms of assembly, heterodimer. Post-translationally, N-glycosylated. As to expression, expressed in shoots, leaves, cauline leaves, siliques and flowers. Expressed a low levels in roots and stems.

The protein resides in the secreted. The protein localises to the extracellular space. The enzyme catalyses Preferential release of a C-terminal arginine or lysine residue.. Completely inhibited by phenylmethylsulfonyl fluoride (PMSF) and partially by leupeptin. Its function is as follows. Active serine carboxypeptidase with broad substrate preference, including basic and hydrophilic groups. Processes a protein involved in an early event in the brassinosteroid signaling pathway. In Arabidopsis thaliana (Mouse-ear cress), this protein is Serine carboxypeptidase 24 (SCPL24).